A 71-amino-acid polypeptide reads, in one-letter code: Protein MMP24OS (71 aa).

The segment covering 1-10 has biased composition (gly residues); the sequence is MGAQLSGGRG. The tract at residues 1–61 is disordered; the sequence is MGAQLSGGRG…PSPWGPLDDV (61 aa). Residues 36 to 55 show a composition bias toward pro residues; the sequence is HPPQPQPQPQPQPQPEPSPW.

The protein is Protein MMP24OS of Homo sapiens (Human).